Consider the following 193-residue polypeptide: CD70 antigen (193 aa).

Residues 1 to 17 (MPEEGSGCSVRRRPYGC) are Cytoplasmic-facing. A helical; Signal-anchor for type II membrane protein membrane pass occupies residues 18–38 (VLRAALVPLVAGLVICLVVCI). Over 39–193 (QRFAQAQQQL…TFFGVQWVRP (155 aa)) the chain is Extracellular. Positions 56 to 191 (DVAELQLNHT…DETFFGVQWV (136 aa)) constitute a THD domain. N-linked (GlcNAc...) asparagine glycosylation occurs at Asn-63. Cystine bridges form between Cys-115/Cys-151 and Cys-133/Cys-168. The N-linked (GlcNAc...) asparagine glycan is linked to Asn-170.

It belongs to the tumor necrosis factor family. Homotrimer. Post-translationally, N-glycosylated.

It localises to the cell membrane. Functionally, expressed at the plasma membrane of B cells, it is the ligand of the CD27 receptor which is specifically expressed at the surface of T cells. The CD70-CD27 signaling pathway mediates antigen-specific T cell activation and expansion which in turn provides immune surveillance of B cells. The sequence is that of CD70 antigen from Homo sapiens (Human).